The chain runs to 281 residues: NADH-quinone oxidoreductase subunit B (281 aa).

[4Fe-4S] cluster contacts are provided by C37, C38, C103, and C132. The interval 242–281 is disordered; the sequence is DAKPLDESRAHGPGPTTADIADAADTADSDAAPGATHDTP. Residues 257–281 show a composition bias toward low complexity; that stretch reads TTADIADAADTADSDAAPGATHDTP.

The protein belongs to the complex I 20 kDa subunit family. NDH-1 is composed of 14 different subunits. Subunits NuoB, C, D, E, F, and G constitute the peripheral sector of the complex. It depends on [4Fe-4S] cluster as a cofactor.

The protein resides in the cell membrane. It catalyses the reaction a quinone + NADH + 5 H(+)(in) = a quinol + NAD(+) + 4 H(+)(out). Its function is as follows. NDH-1 shuttles electrons from NADH, via FMN and iron-sulfur (Fe-S) centers, to quinones in the respiratory chain. The immediate electron acceptor for the enzyme in this species is believed to be a menaquinone. Couples the redox reaction to proton translocation (for every two electrons transferred, four hydrogen ions are translocated across the cytoplasmic membrane), and thus conserves the redox energy in a proton gradient. This chain is NADH-quinone oxidoreductase subunit B, found in Frankia alni (strain DSM 45986 / CECT 9034 / ACN14a).